The sequence spans 171 residues: Ribosome maturation factor RimM (171 aa).

The region spanning 94–168 (NDEFYKDELI…MTIVPPEIVG (75 aa)) is the PRC barrel domain.

This sequence belongs to the RimM family. In terms of assembly, binds ribosomal protein uS19.

Its subcellular location is the cytoplasm. Functionally, an accessory protein needed during the final step in the assembly of 30S ribosomal subunit, possibly for assembly of the head region. Essential for efficient processing of 16S rRNA. May be needed both before and after RbfA during the maturation of 16S rRNA. It has affinity for free ribosomal 30S subunits but not for 70S ribosomes. This is Ribosome maturation factor RimM from Anaplasma phagocytophilum (strain HZ).